The following is a 389-amino-acid chain: Aminomethyltransferase (389 aa).

This sequence belongs to the GcvT family. As to quaternary structure, the glycine cleavage system is composed of four proteins: P, T, L and H.

It catalyses the reaction N(6)-[(R)-S(8)-aminomethyldihydrolipoyl]-L-lysyl-[protein] + (6S)-5,6,7,8-tetrahydrofolate = N(6)-[(R)-dihydrolipoyl]-L-lysyl-[protein] + (6R)-5,10-methylene-5,6,7,8-tetrahydrofolate + NH4(+). The glycine cleavage system catalyzes the degradation of glycine. The protein is Aminomethyltransferase of Corynebacterium jeikeium (strain K411).